The chain runs to 316 residues: Cell division protein FtsQ (316 aa).

A disordered region spans residues 1 to 34 (MAKAARRTKSAPARRSPRRHARQTGATIRRPKRP). Over 1-61 (MAKAARRTKS…HPLLKQMAKR (61 aa)) the chain is Cytoplasmic. The chain crosses the membrane as a helical span at residues 62–80 (LLLILVIVGFLAGLWAARW). Residues 81 to 316 (PQLLATKTGE…AADPLVSDRI (236 aa)) are Periplasmic-facing. Positions 97-165 (FSVRHVEIVG…DTLVVDIVER (69 aa)) constitute a POTRA domain. A disordered region spans residues 295–316 (PEPVKKATKPAKAADPLVSDRI).

This sequence belongs to the FtsQ/DivIB family. FtsQ subfamily.

The protein localises to the cell inner membrane. Essential cell division protein. The chain is Cell division protein FtsQ from Zymomonas mobilis subsp. mobilis (strain ATCC 31821 / ZM4 / CP4).